Consider the following 186-residue polypeptide: UPF0398 protein LBUL_0921 (186 aa).

This sequence belongs to the UPF0398 family.

The protein is UPF0398 protein LBUL_0921 of Lactobacillus delbrueckii subsp. bulgaricus (strain ATCC BAA-365 / Lb-18).